The primary structure comprises 447 residues: MTKKLYIETHGCQMNEYDSSRMVDLLGEHQALEVTEKPEEADVILLNTCSIREKAQDKVFSQLGRWRELKQANPDLVIGVGGCVASQEGAAIRDRAPYVDVVFGPQTLHRLPEMIDAARTTKTAQVDISFPEIEKFDRLPEPRVDGPSAFVSVMEGCSKYCTFCVVPYTRGEEVSRPLADVLLEITQLTDKGVKEVTLLGQNVNGYRGATPDGRIADFAELLHAVAALDGIERIRYTTSHPLEFSDAIIAAHAEIPQLVKYLHLPVQSGSDRILAAMKRNHTALEYKSRIRKLRAAVPDILISSDFIVGFPGETEKDFEQTMKLIEDVGFDFSFSFIYSSRPGTPAADLVDDTPDEVKKQRLAILQHRINQYGFENSRRMVGTVQRILVSDYSKKDPGMLQGRTEQNRIVNFRCDNPRLIGQFVDVHIDDALPHSLRGTLLDASTVN.

The MTTase N-terminal domain occupies 3-120 (KKLYIETHGC…LPEMIDAART (118 aa)). Positions 12, 49, 83, 157, 161, and 164 each coordinate [4Fe-4S] cluster. The Radical SAM core domain maps to 143-375 (RVDGPSAFVS…QHRINQYGFE (233 aa)). The TRAM domain maps to 378 to 442 (RRMVGTVQRI…PHSLRGTLLD (65 aa)).

It belongs to the methylthiotransferase family. MiaB subfamily. Monomer. [4Fe-4S] cluster serves as cofactor.

The protein localises to the cytoplasm. The catalysed reaction is N(6)-dimethylallyladenosine(37) in tRNA + (sulfur carrier)-SH + AH2 + 2 S-adenosyl-L-methionine = 2-methylsulfanyl-N(6)-dimethylallyladenosine(37) in tRNA + (sulfur carrier)-H + 5'-deoxyadenosine + L-methionine + A + S-adenosyl-L-homocysteine + 2 H(+). Functionally, catalyzes the methylthiolation of N6-(dimethylallyl)adenosine (i(6)A), leading to the formation of 2-methylthio-N6-(dimethylallyl)adenosine (ms(2)i(6)A) at position 37 in tRNAs that read codons beginning with uridine. This chain is tRNA-2-methylthio-N(6)-dimethylallyladenosine synthase, found in Ectopseudomonas mendocina (strain ymp) (Pseudomonas mendocina).